Here is a 658-residue protein sequence, read N- to C-terminus: UvrABC system protein B (658 aa).

The Helicase ATP-binding domain occupies 26-413; that stretch reads EGINSGKKKQ…SPEVIEQIIR (388 aa). 39–46 lines the ATP pocket; that stretch reads GATGTGKT. Residues 92–115 carry the Beta-hairpin motif; it reads YYDYYQPEAYVPQTDTFIEKDAQI. A Helicase C-terminal domain is found at 430–596; sequence QIDDLLGEIQ…TIQKGVRDVI (167 aa). Residues 622 to 657 form the UVR domain; the sequence is EKTIAKMEAEMKEAAKALDFERAAELRDLLLELKAE.

Belongs to the UvrB family. Forms a heterotetramer with UvrA during the search for lesions. Interacts with UvrC in an incision complex.

It is found in the cytoplasm. In terms of biological role, the UvrABC repair system catalyzes the recognition and processing of DNA lesions. A damage recognition complex composed of 2 UvrA and 2 UvrB subunits scans DNA for abnormalities. Upon binding of the UvrA(2)B(2) complex to a putative damaged site, the DNA wraps around one UvrB monomer. DNA wrap is dependent on ATP binding by UvrB and probably causes local melting of the DNA helix, facilitating insertion of UvrB beta-hairpin between the DNA strands. Then UvrB probes one DNA strand for the presence of a lesion. If a lesion is found the UvrA subunits dissociate and the UvrB-DNA preincision complex is formed. This complex is subsequently bound by UvrC and the second UvrB is released. If no lesion is found, the DNA wraps around the other UvrB subunit that will check the other stand for damage. This Bacillus cereus (strain ATCC 14579 / DSM 31 / CCUG 7414 / JCM 2152 / NBRC 15305 / NCIMB 9373 / NCTC 2599 / NRRL B-3711) protein is UvrABC system protein B.